Here is a 371-residue protein sequence, read N- to C-terminus: Palmitoyl-monogalactosyldiacylglycerol delta-7 desaturase, chloroplastic (371 aa).

The transit peptide at 1-67 (MASLLTKPKP…KGLKRDVTTA (67 aa)) directs the protein to the chloroplast. 2 helical membrane-spanning segments follow: residues 103 to 123 (FGAV…PFQF) and 127 to 147 (AVSV…TLSF). A Histidine box-1 motif is present at residues 148–153 (HRNLSH). A Histidine box-2 motif is present at residues 185-189 (HRYHH). The chain crosses the membrane as a helical span at residues 251–271 (ALAVALYAMGGFPFIVWGMGV). The Histidine box-3 signature appears at 317–321 (HNNHH).

It belongs to the fatty acid desaturase type 1 family. Requires Fe(2+) as cofactor. In terms of tissue distribution, highly expressed in young leaves. Low expression in roots.

The protein resides in the plastid. It localises to the chloroplast membrane. It catalyses the reaction a 1-acyl-2-hexadecanoyl-glycerolipid + 2 reduced [2Fe-2S]-[ferredoxin] + O2 + 2 H(+) = a 1-acyl-2-[(7Z)-hexadecenoyl]-glycerolipid + 2 oxidized [2Fe-2S]-[ferredoxin] + 2 H2O. It participates in lipid metabolism; oxylipin biosynthesis. Its pathway is lipid metabolism; polyunsaturated fatty acid biosynthesis. Its function is as follows. Fatty acid desaturase involved in the first desaturation step leading to the formation of hexadeca 7,10,13-trienoic acid (16:3(7Z,10Z,13Z)), the major functional components of thylakoid membranes. Required for chloroplast biogenesis at low temperature. Also indirectly involved in the production of the oxylipin dinor-oxo-phyto-dienoic acid implicated in wound signaling. In Arabidopsis thaliana (Mouse-ear cress), this protein is Palmitoyl-monogalactosyldiacylglycerol delta-7 desaturase, chloroplastic.